The sequence spans 264 residues: Glutamate racemase (264 aa).

Residues Asp-10–Ser-11 and Tyr-42–Gly-43 each bind substrate. The active-site Proton donor/acceptor is Cys-73. Residue Asn-74–Thr-75 coordinates substrate. Cys-183 acts as the Proton donor/acceptor in catalysis. Thr-184–His-185 lines the substrate pocket.

Belongs to the aspartate/glutamate racemases family.

The enzyme catalyses L-glutamate = D-glutamate. It participates in cell wall biogenesis; peptidoglycan biosynthesis. Functionally, provides the (R)-glutamate required for cell wall biosynthesis. The chain is Glutamate racemase from Streptococcus agalactiae serotype III (strain NEM316).